Consider the following 810-residue polypeptide: Chloride channel protein (810 aa).

At 2 to 48 the chain is on the cytoplasmic side; it reads SHEKNEASGNPEAQSWKAQEAMLGVKTEVSRWRAVKNCLYRHLVKVL. 2 consecutive transmembrane segments (helical) span residues 49–86 and 93–116; these read GEDWIFLLLLGALMALVSWAMDFIGSRGLRFYKYLFAM and LQYLVWVCYPLILILFSSLFCQIV. Residues 122 to 126 carry the Selectivity filter part_1 motif; the sequence is GSGIP. Ser123 contributes to the chloride binding site. Residues 125–132 constitute an intramembrane region (helical); that stretch reads IPELKTII. A run of 2 helical transmembrane segments spans residues 141 to 160 and 166 to 184; these read LTLRTFVAKTVGLTVALSAG and EGPFVHIASICATLLNQLL. The short motif at 164-168 is the Selectivity filter part_2 element; that stretch reads GKEGP. 2 intramembrane regions (helical) span residues 201 to 213 and 217 to 225; these read ILTVGCALGISCC and PLAGVLFSI. 3 consecutive transmembrane segments (helical) span residues 237–254, 283–311, and 320–339; these read YWRGFLGGAFSAFIFRVL, LPAFAIIGIASGFFGALFVYLNRQIIVFM, and ILKKQRLIYPAVVTFVLATL. A glycan (N-linked (GlcNAc...) asparagine) is linked at Asn365. The next 2 helical transmembrane spans lie at 389–408 and 416–439; these read NIFIVMALYFVMHFWMAALA and GAFVPVFNLGAVLGRFVGELMALL. The Selectivity filter part_3 motif lies at 416-420; the sequence is GAFVP. Phe418 is a binding site for chloride. Positions 456–470 form an intramembrane region, helical; it reads GEYAVIGAAAMTGAV. Positions 471–472 form an intramembrane region, note=Loop between two helices; that stretch reads TH. An intramembrane region (helical) is located at residues 473 to 484; sequence AVSTAVICFELT. Residues 485–489 constitute an intramembrane region (note=Loop between two helices); sequence GQISH. The helical transmembrane segment at 490-506 threads the bilayer; that stretch reads VLPMMVAVILANMVAQG. Residues 507 to 810 lie on the Cytoplasmic side of the membrane; sequence LQPSLYDSII…RTATSNSSGK (304 aa). Tyr512 serves as a coordination point for chloride. Residues 543–601 enclose the CBS 1 domain; the sequence is MVRDVTSIASTSTYGDLLHVLRQTKLKFFPFVDTPETNTLLGSIERTEVEGLLQRRISA. 2 disordered regions span residues 604–631 and 658–688; these read RQPATAAEAEEEGRNGERGASFTGDVPG and KVQTEDPRPPSPVPAEEPTQTSGIYQKKHKG. The CBS 2 domain maps to 724-781; the sequence is IDQSPFQLVEGTSLQKTHTLFSLLGLDRAYVTSMGKLVGVVALAEIQAAIEGSYQKGF.

Belongs to the chloride channel (TC 2.A.49) family. ClC-0 subfamily. In terms of assembly, homodimer. Each subunit has channel activity ('Double barreled channel').

Its subcellular location is the membrane. Functionally, voltage-gated chloride channel. This channel is thought to ensure the high conductance of the non-innervated membrane of the electrocyte necessary for efficient current generation caused by sodium influx through the acetylcholine receptor at the innervated membrane. The protein is Chloride channel protein of Tetronarce californica (Pacific electric ray).